The chain runs to 852 residues: Leucine--tRNA ligase (852 aa).

The 'HIGH' region signature appears at 51–61 (PYPSGDLHMGH). A 'KMSKS' region motif is present at residues 615 to 619 (KMSKS). Lysine 618 contacts ATP.

It belongs to the class-I aminoacyl-tRNA synthetase family.

The protein resides in the cytoplasm. The catalysed reaction is tRNA(Leu) + L-leucine + ATP = L-leucyl-tRNA(Leu) + AMP + diphosphate. The protein is Leucine--tRNA ligase of Clavibacter sepedonicus (Clavibacter michiganensis subsp. sepedonicus).